Reading from the N-terminus, the 205-residue chain is Putative lipoprotein LppC (205 aa).

Positions 1 to 27 (MESPMTSTLHRTPLATAGLALVVALGG) are cleaved as a signal peptide. A lipid anchor (N-palmitoyl cysteine) is attached at Cys28. Residue Cys28 is the site of S-diacylglycerol cysteine attachment. Residues 126-145 (GSTADGQTPAGGHSVPNSGG) form a disordered region.

It belongs to the UPF0098 family.

The protein localises to the cell membrane. This Mycobacterium tuberculosis (strain CDC 1551 / Oshkosh) protein is Putative lipoprotein LppC (lppC).